A 407-amino-acid polypeptide reads, in one-letter code: Polygalacturonase (407 aa).

Residues 1–26 (MAPHLNIVPSMFVLLLLFISASKVQS) form the signal peptide. 2 PbH1 repeats span residues 180–206 (CKNI…HMGK) and 207–228 (SEGV…SIGD). The N-linked (GlcNAc...) asparagine glycan is linked to asparagine 182. Aspartate 221 functions as the Proton donor in the catalytic mechanism. Cysteine 223 and cysteine 240 form a disulfide bridge. Histidine 244 is an active-site residue. PbH1 repeat units lie at residues 260–281 (VEGI…RIKT) and 290–311 (VSEI…LIDQ). Asparagine 267, asparagine 272, asparagine 302, and asparagine 331 each carry an N-linked (GlcNAc...) asparagine glycan. 2 cysteine pairs are disulfide-bonded: cysteine 351-cysteine 357 and cysteine 379-cysteine 395. Residues 357 to 384 (CQNVELADIDIKHNGAEPATSQCLNVKP) form a PbH1 5 repeat.

This sequence belongs to the glycosyl hydrolase 28 family. In terms of tissue distribution, pollen.

It is found in the secreted. The protein resides in the cell wall. It catalyses the reaction (1,4-alpha-D-galacturonosyl)n+m + H2O = (1,4-alpha-D-galacturonosyl)n + (1,4-alpha-D-galacturonosyl)m.. Functionally, may function in the depolymerization of the pectin in its walls during pollen tube elongation, or in that of the pistil during pollination. This is Polygalacturonase (G9) from Gossypium hirsutum (Upland cotton).